The chain runs to 314 residues: Ribosomal RNA small subunit methyltransferase H (314 aa).

S-adenosyl-L-methionine-binding positions include 36–38 (GGH), D56, F80, D102, and Q109. The tract at residues 278–300 (GGRSLKSIGKMKPSEEEVADNPR) is disordered. A compositionally biased stretch (basic and acidic residues) spans 289 to 300 (KPSEEEVADNPR).

The protein belongs to the methyltransferase superfamily. RsmH family.

Its subcellular location is the cytoplasm. It catalyses the reaction cytidine(1402) in 16S rRNA + S-adenosyl-L-methionine = N(4)-methylcytidine(1402) in 16S rRNA + S-adenosyl-L-homocysteine + H(+). In terms of biological role, specifically methylates the N4 position of cytidine in position 1402 (C1402) of 16S rRNA. This is Ribosomal RNA small subunit methyltransferase H from Photorhabdus laumondii subsp. laumondii (strain DSM 15139 / CIP 105565 / TT01) (Photorhabdus luminescens subsp. laumondii).